The sequence spans 120 residues: Peptidyl-tRNA hydrolase (120 aa).

This sequence belongs to the PTH2 family.

The protein resides in the cytoplasm. It catalyses the reaction an N-acyl-L-alpha-aminoacyl-tRNA + H2O = an N-acyl-L-amino acid + a tRNA + H(+). Functionally, the natural substrate for this enzyme may be peptidyl-tRNAs which drop off the ribosome during protein synthesis. The chain is Peptidyl-tRNA hydrolase from Pyrobaculum aerophilum (strain ATCC 51768 / DSM 7523 / JCM 9630 / CIP 104966 / NBRC 100827 / IM2).